A 223-amino-acid chain; its full sequence is Coiled-coil domain-containing protein 124 (223 aa).

Residues 1-126 are disordered; that stretch reads MPKKFQGENT…AEKAKSHLEV (126 aa). Residues 15 to 82 adopt a coiled-coil conformation; that stretch reads ARARRAEAKA…LLEEEDSKLK (68 aa). Basic and acidic residues-rich tracts occupy residues 18–74 and 99–126; these read RRAE…QRLL and QIEDTLRRDHQLREAPDTAEKAKSHLEV. 2 positions are modified to phosphoserine: Ser141 and Ser194. The interval 204–223 is disordered; sequence WLRSPDNPMNQRAVPFNAPK.

Belongs to the CCDC124 family. As to quaternary structure, associates with translationally inactive ribosomes in the nonrotated state. Interacts with RASGEF1B. As to expression, ubiquitously expressed.

It localises to the cytoplasm. The protein resides in the cytoskeleton. The protein localises to the microtubule organizing center. Its subcellular location is the centrosome. It is found in the midbody. Its function is as follows. Ribosome-binding protein involved in ribosome hibernation: associates with translationally inactive ribosomes and stabilizes the nonrotated conformation of the 80S ribosome, thereby promoting ribosome preservation and storage. Also required for proper progression of late cytokinetic stages. This chain is Coiled-coil domain-containing protein 124, found in Homo sapiens (Human).